The following is a 305-amino-acid chain: Thioredoxin reductase (305 aa).

28–35 (LGIETSSQ) provides a ligand contact to FAD. C129 and C132 are joined by a disulfide. Residue 272 to 281 (DCCDWIYRQA) coordinates FAD.

It belongs to the class-II pyridine nucleotide-disulfide oxidoreductase family. As to quaternary structure, homodimer. Requires FAD as cofactor.

The protein localises to the cytoplasm. It carries out the reaction [thioredoxin]-dithiol + NADP(+) = [thioredoxin]-disulfide + NADPH + H(+). This chain is Thioredoxin reductase (TRXB), found in Spironucleus barkhanus.